The chain runs to 783 residues: Lon protease (783 aa).

The Lon N-terminal domain maps to 16 to 210 (LPLLASRGVV…KLLEIIKDEI (195 aa)). 361 to 368 (GAPGVGKT) is an ATP binding site. The 182-residue stretch at 597 to 778 (KDRVGVATGM…DQVLDLILGG (182 aa)) folds into the Lon proteolytic domain. Residues serine 684 and lysine 727 contribute to the active site.

It belongs to the peptidase S16 family. In terms of assembly, homohexamer. Organized in a ring with a central cavity.

The protein localises to the cytoplasm. It catalyses the reaction Hydrolysis of proteins in presence of ATP.. ATP-dependent serine protease that mediates the selective degradation of mutant and abnormal proteins as well as certain short-lived regulatory proteins. Required for cellular homeostasis and for survival from DNA damage and developmental changes induced by stress. Degrades polypeptides processively to yield small peptide fragments that are 5 to 10 amino acids long. Binds to DNA in a double-stranded, site-specific manner. This is Lon protease from Halothermothrix orenii (strain H 168 / OCM 544 / DSM 9562).